Here is a 664-residue protein sequence, read N- to C-terminus: Intraflagellar transport protein 70A2 (664 aa).

TPR repeat units lie at residues 11–44, 45–78, 153–186, 188–220, 395–423, 424–456, and 458–491; these read DGEF…SSRS, RAGL…HPEL, PDGL…SGYQ, DVSY…GIRQ, QVQE…EKYI, PVLM…CNDH, and VWKL…NYDN. The stretch at 507–534 forms a coiled coil; the sequence is YIMTSQNEEAEELMRKIEKEEEQLSYGD. A TPR 8 repeat occupies 543–576; that stretch reads CIVNLVIGTLYCAKGNYDFGISRVIKSLEPYHKK.

Belongs to the TTC30/dfy-1/fleer family. As to quaternary structure, interacts wit the IFT B complex component IFT52.

The protein resides in the cell projection. It is found in the cilium. Functionally, required for polyglutamylation of axonemal tubulin. Plays a role in anterograde intraflagellar transport (IFT), the process by which cilia precursors are transported from the base of the cilium to the site of their incorporation at the tip. In Mus musculus (Mouse), this protein is Intraflagellar transport protein 70A2 (Ift70a2).